The primary structure comprises 152 residues: Cell division protein SepF (152 aa).

Basic and acidic residues predominate over residues 23 to 32 (EVAREPEPMQ). The interval 23-42 (EVAREPEPMQKKTKKEKPSK) is disordered.

It belongs to the SepF family. In terms of assembly, homodimer. Interacts with FtsZ.

It is found in the cytoplasm. Functionally, cell division protein that is part of the divisome complex and is recruited early to the Z-ring. Probably stimulates Z-ring formation, perhaps through the cross-linking of FtsZ protofilaments. Its function overlaps with FtsA. The protein is Cell division protein SepF of Listeria innocua serovar 6a (strain ATCC BAA-680 / CLIP 11262).